Reading from the N-terminus, the 1285-residue chain is Period circadian protein homolog 1 (1285 aa).

The segment at 1–134 (MSGPLEGADG…SSEQSARART (134 aa)) is disordered. The interaction with BTRC stretch occupies residues 1-151 (MSGPLEGADG…LRELKLRLPP (151 aa)). Low complexity-rich tracts occupy residues 48–57 (NSNGSSGNES) and 64–115 (GASQ…ASSE). The span at 116 to 132 (QDNPSTSGCSSEQSARA) shows a compositional bias: polar residues. Residue T121 is modified to Phosphothreonine; by CSNK1E. A phosphoserine; by CSNK1E mark is found at S122 and S126. Residues 138 to 147 (LMTALRELKL) carry the Nuclear export signal 1 motif. PAS domains are found at residues 208 to 275 (ITSE…PFRL) and 348 to 414 (YEAP…KILQ). A PAC domain is found at 422–465 (HSPIRFCARNGEYVTMDTSWAGFVHPWSRKVAFVLGRHKVRTAP). Positions 489-498 (LSEQIHRLLL) match the Nuclear export signal 2 motif. 2 disordered regions span residues 503–544 (SSSP…PAPV) and 643–694 (TKRK…KEPV). 2 stretches are compositionally biased toward low complexity: residues 523-533 (SPGSSSDSNGG) and 648-658 (ASSSSCTASSA). Residues 592-811 (ELEVVPMPNQ…GLDSSSATPS (220 aa)) form a required for phosphorylation by CSNK1E region. Phosphoserine is present on residues S657, S659, S700, and S811. 2 disordered regions span residues 802-867 (GLDS…PPST) and 931-1030 (LSQA…DALS). Positions 820–836 (VPPGRRHHCRSKAKRSR) match the Nuclear localization signal motif. Residues 823-840 (GRRHHCRSKAKRSRHHHT) are compositionally biased toward basic residues. Pro residues predominate over residues 853–867 (SPVPPSGPWPPPPST). Positions 943-954 (ASHSPSPSLTPL) are enriched in low complexity. Residues 967–979 (FNSRCSSPLQLNL) show a composition bias toward polar residues. Residues S972 and S973 each carry the phosphoserine modification. Residues 975 to 982 (LQLNLLQL) carry the Nuclear export signal 3 motif. Positions 1036–1040 (LELLL) match the LXXLL motif. Residues 1045–1055 (RSGTGSAASGS) show a composition bias toward low complexity. Disordered regions lie at residues 1045 to 1091 (RSGT…SKYF) and 1202 to 1285 (IQDP…NSTS). Gly residues predominate over residues 1056–1070 (LGSGLGSGSGSGSHE). The span at 1071-1088 (GGSTSASITRSSQSSHTS) shows a compositional bias: low complexity. The tract at residues 1142–1285 (SRDRASVLKQ…ALPAEENSTS (144 aa)) is CRY binding domain. A compositionally biased stretch (gly residues) spans 1229–1241 (GEGGGGGGGGGEG). Residues 1269 to 1285 (GGSSSSPALPAEENSTS) show a composition bias toward polar residues.

In terms of assembly, homodimer. Component of the circadian core oscillator, which includes the CRY proteins, CLOCK or NPAS2, BMAL1 or BMAL2, CSNK1D and/or CSNK1E, TIMELESS, and the PER proteins. Interacts directly with TIMELESS, PER2, PER3, CRY1 and CRY2. Interacts with BMAL1 and CLOCK. Interacts with GPRASP1. Interacts (phosphorylated) with BTRC and FBXW11; the interactions trigger proteasomal degradation. Interacts with NONO, WDR5 and SFPQ. Interacts with USP2. Interacts with HNF4A. In terms of processing, phosphorylated on serine residues by CSNK1D, CSNK1E and probably also by CSNK1G2. Phosphorylation by CSNK1D or CSNK1E promotes nuclear location of PER proteins as well as ubiquitination and subsequent degradation. May be dephosphorylated by PP1. Ubiquitinated; requires phosphorylation by CSNK1E and interaction with BTRC and FBXW11. Deubiquitinated by USP2. Expressed in the brain, mainly in the suprachiasmatic nucleus (SCN). Expression also found in the harderian gland, lung, eye, intestine, liver and skeletal muscle.

Its subcellular location is the nucleus. It is found in the cytoplasm. Its function is as follows. Transcriptional repressor which forms a core component of the circadian clock. The circadian clock, an internal time-keeping system, regulates various physiological processes through the generation of approximately 24 hour circadian rhythms in gene expression, which are translated into rhythms in metabolism and behavior. It is derived from the Latin roots 'circa' (about) and 'diem' (day) and acts as an important regulator of a wide array of physiological functions including metabolism, sleep, body temperature, blood pressure, endocrine, immune, cardiovascular, and renal function. Consists of two major components: the central clock, residing in the suprachiasmatic nucleus (SCN) of the brain, and the peripheral clocks that are present in nearly every tissue and organ system. Both the central and peripheral clocks can be reset by environmental cues, also known as Zeitgebers (German for 'timegivers'). The predominant Zeitgeber for the central clock is light, which is sensed by retina and signals directly to the SCN. The central clock entrains the peripheral clocks through neuronal and hormonal signals, body temperature and feeding-related cues, aligning all clocks with the external light/dark cycle. Circadian rhythms allow an organism to achieve temporal homeostasis with its environment at the molecular level by regulating gene expression to create a peak of protein expression once every 24 hours to control when a particular physiological process is most active with respect to the solar day. Transcription and translation of core clock components (CLOCK, NPAS2, BMAL1, BMAL2, PER1, PER2, PER3, CRY1 and CRY2) plays a critical role in rhythm generation, whereas delays imposed by post-translational modifications (PTMs) are important for determining the period (tau) of the rhythms (tau refers to the period of a rhythm and is the length, in time, of one complete cycle). A diurnal rhythm is synchronized with the day/night cycle, while the ultradian and infradian rhythms have a period shorter and longer than 24 hours, respectively. Disruptions in the circadian rhythms contribute to the pathology of cardiovascular diseases, cancer, metabolic syndromes and aging. A transcription/translation feedback loop (TTFL) forms the core of the molecular circadian clock mechanism. Transcription factors, CLOCK or NPAS2 and BMAL1 or BMAL2, form the positive limb of the feedback loop, act in the form of a heterodimer and activate the transcription of core clock genes and clock-controlled genes (involved in key metabolic processes), harboring E-box elements (5'-CACGTG-3') within their promoters. The core clock genes: PER1/2/3 and CRY1/2 which are transcriptional repressors form the negative limb of the feedback loop and interact with the CLOCK|NPAS2-BMAL1|BMAL2 heterodimer inhibiting its activity and thereby negatively regulating their own expression. This heterodimer also activates nuclear receptors NR1D1/2 and RORA/B/G, which form a second feedback loop and which activate and repress BMAL1 transcription, respectively. Regulates circadian target genes expression at post-transcriptional levels, but may not be required for the repression at transcriptional level. Controls PER2 protein decay. Represses CRY2 preventing its repression on CLOCK/BMAL1 target genes such as FXYD5 and SCNN1A in kidney and PPARA in liver. Besides its involvement in the maintenance of the circadian clock, has an important function in the regulation of several processes. Participates in the repression of glucocorticoid receptor NR3C1/GR-induced transcriptional activity by reducing the association of NR3C1/GR to glucocorticoid response elements (GREs) by BMAL1:CLOCK. Plays a role in the modulation of the neuroinflammatory state via the regulation of inflammatory mediators release, such as CCL2 and IL6. In spinal astrocytes, negatively regulates the MAPK14/p38 and MAPK8/JNK MAPK cascades as well as the subsequent activation of NFkappaB. Coordinately regulates the expression of multiple genes that are involved in the regulation of renal sodium reabsorption. Can act as gene expression activator in a gene and tissue specific manner, in kidney enhances WNK1 and SLC12A3 expression in collaboration with CLOCK. Modulates hair follicle cycling. Represses the CLOCK-BMAL1 induced transcription of BHLHE40/DEC1. The chain is Period circadian protein homolog 1 (PER1) from Spalax judaei (Judean Mountains blind mole rat).